A 135-amino-acid polypeptide reads, in one-letter code: Protein E6 (135 aa).

2 zinc fingers span residues 11 to 47 (CVFC…CTAC) and 83 to 119 (CMYC…CYTC).

It belongs to the papillomaviridae E6 protein family. Forms homodimers. Interacts with ubiquitin-protein ligase UBE3A/E6-AP; this interaction stimulates UBE3A ubiquitin activity. Interacts with host BAK1.

It localises to the host cytoplasm. It is found in the host nucleus. Functionally, plays a major role in the induction and maintenance of cellular transformation. E6 associates with host UBE3A/E6-AP ubiquitin-protein ligase and modulates its activity. Protects host keratinocytes from apoptosis by mediating the degradation of host BAK1. May also inhibit host immune response. This Odocoileus virginianus papillomavirus 1 (DPV) protein is Protein E6.